We begin with the raw amino-acid sequence, 464 residues long: C-terminal processing peptidase, chloroplastic (464 aa).

A chloroplast-targeting transit peptide spans methionine 1–cysteine 32. Residues serine 33–alanine 77 constitute a thylakoid transit peptide. Residues leucine 149–proline 234 enclose the PDZ domain. Residues serine 372 and lysine 397 each act as charge relay system in the active site.

It belongs to the peptidase S41A family. In terms of assembly, monomer.

The protein localises to the plastid. It localises to the chloroplast thylakoid lumen. It catalyses the reaction The enzyme shows specific recognition of a C-terminal tripeptide, Xaa-Yaa-Zaa, in which Xaa is preferably Ala or Leu, Yaa is preferably Ala or Tyr, and Zaa is preferably Ala, but then cleaves at a variable distance from the C-terminus. A typical cleavage is -Ala-Ala-|-Arg-Ala-Ala-Lys-Glu-Asn-Tyr-Ala-Leu-Ala-Ala.. Its activity is regulated as follows. Not inhibited by antipain, 4-amidinophenylmethanesulfonyl fluoride, aprotinin, chymostatin, 3,4-dichloroisocoumarin, diisopropyl fluorophosphate, E64, EDTA, EGTA, iodoacetamide, leupeptin, pepstatin, o-phenanthroline, N-ethylmaleimide, phosphoramidon or phenylmethylsulfonyl fluoride. Its function is as follows. Protease involved in the C-terminal processing of the chloroplastic D1 protein of photosystem II. This proteolytic processing is necessary to allow the light-driven assembly of the tetranuclear manganese cluster, which is responsible for photosynthetic water oxidation. This chain is C-terminal processing peptidase, chloroplastic (ctpA), found in Tetradesmus obliquus (Green alga).